The sequence spans 691 residues: Elongation factor G (691 aa).

One can recognise a tr-type G domain in the interval 6–281 (SKYRNIGIMA…GVVDFLPSPI (276 aa)). GTP contacts are provided by residues 15–22 (AHIDAGKT), 79–83 (DTPGH), and 133–136 (NKMD).

This sequence belongs to the TRAFAC class translation factor GTPase superfamily. Classic translation factor GTPase family. EF-G/EF-2 subfamily.

The protein resides in the cytoplasm. In terms of biological role, catalyzes the GTP-dependent ribosomal translocation step during translation elongation. During this step, the ribosome changes from the pre-translocational (PRE) to the post-translocational (POST) state as the newly formed A-site-bound peptidyl-tRNA and P-site-bound deacylated tRNA move to the P and E sites, respectively. Catalyzes the coordinated movement of the two tRNA molecules, the mRNA and conformational changes in the ribosome. This Wolbachia pipientis wMel protein is Elongation factor G.